Here is a 211-residue protein sequence, read N- to C-terminus: ATP phosphoribosyltransferase (211 aa).

Belongs to the ATP phosphoribosyltransferase family. Short subfamily. Heteromultimer composed of HisG and HisZ subunits.

The protein resides in the cytoplasm. It carries out the reaction 1-(5-phospho-beta-D-ribosyl)-ATP + diphosphate = 5-phospho-alpha-D-ribose 1-diphosphate + ATP. Its pathway is amino-acid biosynthesis; L-histidine biosynthesis; L-histidine from 5-phospho-alpha-D-ribose 1-diphosphate: step 1/9. Functionally, catalyzes the condensation of ATP and 5-phosphoribose 1-diphosphate to form N'-(5'-phosphoribosyl)-ATP (PR-ATP). Has a crucial role in the pathway because the rate of histidine biosynthesis seems to be controlled primarily by regulation of HisG enzymatic activity. The chain is ATP phosphoribosyltransferase from Pseudomonas syringae pv. syringae (strain B728a).